Reading from the N-terminus, the 256-residue chain is MYSIRKQPRNFQRKFNSNTTNRFPIRRKYVGGHTRPSVRRRLTYEPVERPLVHNVLCEKQHGDVFNLQQNTSYTSFVTYPSRGPSGDGRSRDYIKLQSMSVSGVIHAKANCNDDPMEVSHDVNGVFVFSLIMDTKPYLPAGVQALPTFEELFGAYSACYVNLRLLNNQQHRYRVLHSVKRFVSSAGDTKVSQFRFNKRLSTRRYNIWASFHDGDLVNAGGNYRNISKNAILVSYAFVSEHSMSCKPFVQIETSYVG.

The Bipartite nuclear localization signal signature appears at 18–39; sequence NTTNRFPIRRKYVGGHTRPSVR. The short motif at 81–96 is the Nuclear localization signal element; sequence SRGPSGDGRSRDYIKL. The segment at 150-187 is interaction with Arabidopsis thaliana NSI protein; sequence ELFGAYSACYVNLRLLNNQQHRYRVLHSVKRFVSSAGD.

The protein belongs to the begomovirus nuclear shuttle protein family. Binds to single-stranded and double-stranded viral DNA. Interacts with the host nuclear shuttle interacting (NSI) protein. This interaction may allow NSP to recruit NSI monomers to the viral genome and thus regulate nuclear export of viral genome by NSP.

The protein localises to the host nucleus. The protein resides in the host cytoplasm. Its subcellular location is the host cell membrane. Binds to the genomic viral ssDNA, shuttles it into and out of the cell nucleus. Begomoviruses use 2 proteins to transport their DNA from cell to cell. The nuclear shuttle protein (NSP) shuttles it between nucleus and cytoplasm and the movement protein (MP) probably transports the DNA-NSP complex to the cell periphery and facilitates movement across the cell wall. In Hewittia sublobata (Coralbush), this protein is Nuclear shuttle protein.